A 246-amino-acid chain; its full sequence is UPF0736 protein GK0808 (246 aa).

The protein belongs to the UPF0736 family.

This Geobacillus kaustophilus (strain HTA426) protein is UPF0736 protein GK0808.